An 815-amino-acid polypeptide reads, in one-letter code: Phenylalanine--tRNA ligase beta subunit (815 aa).

In terms of domain architecture, tRNA-binding spans 40–155 (APPFDKIVVA…EDAPVGQNIR (116 aa)). The B5 domain maps to 406 to 485 (PQRRPVSLRL…RIYGFERIAA (80 aa)). Mg(2+) is bound by residues Asp463, Asp469, Glu472, and Glu473. The FDX-ACB domain occupies 712–814 (SKFPAAVRDL…LGEAFQARLR (103 aa)).

This sequence belongs to the phenylalanyl-tRNA synthetase beta subunit family. Type 1 subfamily. As to quaternary structure, tetramer of two alpha and two beta subunits. Requires Mg(2+) as cofactor.

It localises to the cytoplasm. The enzyme catalyses tRNA(Phe) + L-phenylalanine + ATP = L-phenylalanyl-tRNA(Phe) + AMP + diphosphate + H(+). In Cupriavidus pinatubonensis (strain JMP 134 / LMG 1197) (Cupriavidus necator (strain JMP 134)), this protein is Phenylalanine--tRNA ligase beta subunit.